Here is a 1217-residue protein sequence, read N- to C-terminus: ATP-dependent helicase/nuclease subunit A (1217 aa).

A UvrD-like helicase ATP-binding domain is found at valine 10 to arginine 475. Alanine 31–threonine 38 provides a ligand contact to ATP. A UvrD-like helicase C-terminal domain is found at lysine 476–glycine 786.

It belongs to the helicase family. AddA subfamily. Heterodimer of AddA and AddB/RexB. Mg(2+) serves as cofactor.

It catalyses the reaction Couples ATP hydrolysis with the unwinding of duplex DNA by translocating in the 3'-5' direction.. The catalysed reaction is ATP + H2O = ADP + phosphate + H(+). In terms of biological role, the heterodimer acts as both an ATP-dependent DNA helicase and an ATP-dependent, dual-direction single-stranded exonuclease. Recognizes the chi site generating a DNA molecule suitable for the initiation of homologous recombination. The AddA nuclease domain is required for chi fragment generation; this subunit has the helicase and 3' -&gt; 5' nuclease activities. This is ATP-dependent helicase/nuclease subunit A from Staphylococcus aureus (strain USA300).